The primary structure comprises 432 residues: UDP-N-acetylglucosamine 1-carboxyvinyltransferase (432 aa).

22-23 (KN) is a phosphoenolpyruvate binding site. Arginine 101 provides a ligand contact to UDP-N-acetyl-alpha-D-glucosamine. Cysteine 125 functions as the Proton donor in the catalytic mechanism. Cysteine 125 carries the post-translational modification 2-(S-cysteinyl)pyruvic acid O-phosphothioketal. UDP-N-acetyl-alpha-D-glucosamine-binding positions include 130-134 (RPVDL), aspartate 315, and isoleucine 337.

It belongs to the EPSP synthase family. MurA subfamily.

Its subcellular location is the cytoplasm. It catalyses the reaction phosphoenolpyruvate + UDP-N-acetyl-alpha-D-glucosamine = UDP-N-acetyl-3-O-(1-carboxyvinyl)-alpha-D-glucosamine + phosphate. Its pathway is cell wall biogenesis; peptidoglycan biosynthesis. Functionally, cell wall formation. Adds enolpyruvyl to UDP-N-acetylglucosamine. The chain is UDP-N-acetylglucosamine 1-carboxyvinyltransferase from Paramagnetospirillum magneticum (strain ATCC 700264 / AMB-1) (Magnetospirillum magneticum).